The following is a 130-amino-acid chain: Protein ApaG (130 aa).

Residues 3–127 form the ApaG domain; it reads RALTRDIEVT…FSLDSPGLVR (125 aa).

The sequence is that of Protein ApaG from Sinorhizobium fredii (strain NBRC 101917 / NGR234).